A 474-amino-acid polypeptide reads, in one-letter code: Ribosomal RNA small subunit methyltransferase F (474 aa).

S-adenosyl-L-methionine-binding positions include 119–125, glutamate 143, aspartate 170, and aspartate 188; that span reads AAAPGSK. Cysteine 241 acts as the Nucleophile in catalysis.

The protein belongs to the class I-like SAM-binding methyltransferase superfamily. RsmB/NOP family.

Its subcellular location is the cytoplasm. It carries out the reaction cytidine(1407) in 16S rRNA + S-adenosyl-L-methionine = 5-methylcytidine(1407) in 16S rRNA + S-adenosyl-L-homocysteine + H(+). Functionally, specifically methylates the cytosine at position 1407 (m5C1407) of 16S rRNA. This is Ribosomal RNA small subunit methyltransferase F from Shewanella oneidensis (strain ATCC 700550 / JCM 31522 / CIP 106686 / LMG 19005 / NCIMB 14063 / MR-1).